A 262-amino-acid polypeptide reads, in one-letter code: Probable aminoglycoside 3'-phosphotransferase (262 aa).

The Proton acceptor role is filled by D187.

Belongs to the aminoglycoside phosphotransferase family.

It catalyses the reaction kanamycin A + ATP = kanamycin 3'-phosphate + ADP + H(+). The protein is Probable aminoglycoside 3'-phosphotransferase (ymdC) of Lactococcus lactis subsp. lactis (strain IL1403) (Streptococcus lactis).